The following is a 118-amino-acid chain: Small ribosomal subunit protein uS13 (118 aa).

A disordered region spans residues 94-118 (SLPVRGQRSKTNARTRKGPRKAIKK).

This sequence belongs to the universal ribosomal protein uS13 family. Part of the 30S ribosomal subunit. Forms a loose heterodimer with protein S19. Forms two bridges to the 50S subunit in the 70S ribosome.

In terms of biological role, located at the top of the head of the 30S subunit, it contacts several helices of the 16S rRNA. In the 70S ribosome it contacts the 23S rRNA (bridge B1a) and protein L5 of the 50S subunit (bridge B1b), connecting the 2 subunits; these bridges are implicated in subunit movement. Contacts the tRNAs in the A and P-sites. This chain is Small ribosomal subunit protein uS13, found in Psychromonas ingrahamii (strain DSM 17664 / CCUG 51855 / 37).